Consider the following 372-residue polypeptide: Queuine tRNA-ribosyltransferase (372 aa).

Aspartate 89 acts as the Proton acceptor in catalysis. Substrate contacts are provided by residues 89 to 93, aspartate 161, and glycine 232; that span reads DSGGF. The RNA binding stretch occupies residues 262-268; it reads GIGDLPS. Aspartate 281 functions as the Nucleophile in the catalytic mechanism. Positions 286–290 are RNA binding; important for wobble base 34 recognition; that stretch reads TKAAR. Zn(2+) is bound by residues cysteine 319, cysteine 321, cysteine 324, and histidine 351.

This sequence belongs to the queuine tRNA-ribosyltransferase family. In terms of assembly, homodimer. Within each dimer, one monomer is responsible for RNA recognition and catalysis, while the other monomer binds to the replacement base PreQ1. The cofactor is Zn(2+).

It carries out the reaction 7-aminomethyl-7-carbaguanine + guanosine(34) in tRNA = 7-aminomethyl-7-carbaguanosine(34) in tRNA + guanine. Its pathway is tRNA modification; tRNA-queuosine biosynthesis. Its function is as follows. Catalyzes the base-exchange of a guanine (G) residue with the queuine precursor 7-aminomethyl-7-deazaguanine (PreQ1) at position 34 (anticodon wobble position) in tRNAs with GU(N) anticodons (tRNA-Asp, -Asn, -His and -Tyr). Catalysis occurs through a double-displacement mechanism. The nucleophile active site attacks the C1' of nucleotide 34 to detach the guanine base from the RNA, forming a covalent enzyme-RNA intermediate. The proton acceptor active site deprotonates the incoming PreQ1, allowing a nucleophilic attack on the C1' of the ribose to form the product. After dissociation, two additional enzymatic reactions on the tRNA convert PreQ1 to queuine (Q), resulting in the hypermodified nucleoside queuosine (7-(((4,5-cis-dihydroxy-2-cyclopenten-1-yl)amino)methyl)-7-deazaguanosine). The protein is Queuine tRNA-ribosyltransferase of Chlamydia caviae (strain ATCC VR-813 / DSM 19441 / 03DC25 / GPIC) (Chlamydophila caviae).